Reading from the N-terminus, the 177-residue chain is Large ribosomal subunit protein uL6 (177 aa).

It belongs to the universal ribosomal protein uL6 family. In terms of assembly, part of the 50S ribosomal subunit.

This protein binds to the 23S rRNA, and is important in its secondary structure. It is located near the subunit interface in the base of the L7/L12 stalk, and near the tRNA binding site of the peptidyltransferase center. The protein is Large ribosomal subunit protein uL6 of Shewanella amazonensis (strain ATCC BAA-1098 / SB2B).